The following is a 182-amino-acid chain: Ribulose bisphosphate carboxylase small subunit, chloroplastic 5 (182 aa).

The N-terminal 49 residues, 1–49 (MASSLMSNAATTMAAATTTAQANMVAPFNGLKSISAFPVTRKNNDITSV), are a transit peptide targeting the chloroplast.

This sequence belongs to the RuBisCO small chain family. In terms of assembly, heterohexadecamer of 8 large and 8 small subunits.

It is found in the plastid. The protein localises to the chloroplast. In terms of biological role, ruBisCO catalyzes two reactions: the carboxylation of D-ribulose 1,5-bisphosphate, the primary event in carbon dioxide fixation, as well as the oxidative fragmentation of the pentose substrate. Both reactions occur simultaneously and in competition at the same active site. Although the small subunit is not catalytic it is essential for maximal activity. This Mesembryanthemum crystallinum (Common ice plant) protein is Ribulose bisphosphate carboxylase small subunit, chloroplastic 5.